Here is a 423-residue protein sequence, read N- to C-terminus: Zinc transporter ZIP13 (423 aa).

Topologically, residues 1-15 are lumenal; it reads MPGCPCPGIGMAGQR. The helical transmembrane segment at 16–36 threads the bilayer; sequence LLFLAALALELLGGAGGSQQA. Residues 37–68 are Cytoplasmic-facing; it reads LRSRGVAAACRLDSKESESWGALLSGERLETW. The chain crosses the membrane as a helical span at residues 69-89; the sequence is ICSLLGSLMVGLSGVFPLLVI. The Lumenal segment spans residues 90-108; sequence PLEMGTTLRSEAGARRLKQ. A helical membrane pass occupies residues 109 to 129; that stretch reads LLSFALGGLLGNVFLHLLPEA. Residues 130 to 149 lie on the Cytoplasmic side of the membrane; that stretch reads WAYTNSASSGGERQSLQQQQ. A helical membrane pass occupies residues 150–170; sequence QLGLWVIAGFLTFLVLEKLFF. Topologically, residues 171 to 235 are lumenal; the sequence is DSKGKEETSQ…TIDNFTHGLA (65 aa). The chain crosses the membrane as a helical span at residues 236 to 256; the sequence is VAASFLVSKKIGLLTTMAILL. The XEXPHE-motif motif lies at 257–262; that stretch reads HEIPHE. At 257–278 the chain is on the cytoplasmic side; that stretch reads HEIPHEVGDFAILLRAGFDRWS. The helical transmembrane segment at 279-299 threads the bilayer; sequence AAKLQLSTALGGLLGACFAIC. Over 300 to 368 the chain is Lumenal; it reads AQSPKGVGTG…RAPPPATEET (69 aa). Residues 369 to 389 form a helical membrane-spanning segment; sequence VAWILPFTSGGFLYIALVNVL. Topologically, residues 390 to 401 are cytoplasmic; it reads PDLLEEDDPWRS. A helical membrane pass occupies residues 402–422; that stretch reads LQQVLLLCAGIVVMVLFSVFV. Glutamate 423 is a topological domain (lumenal).

Belongs to the ZIP transporter (TC 2.A.5) family. As to quaternary structure, homodimer.

Its subcellular location is the golgi apparatus membrane. The protein resides in the cytoplasmic vesicle membrane. It is found in the endoplasmic reticulum membrane. It carries out the reaction Zn(2+)(in) = Zn(2+)(out). In terms of biological role, functions as a zinc transporter transporting Zn(2+) from the Golgi apparatus to the cytosol and thus influences the zinc level at least in areas of the cytosol. May regulate beige adipocyte differentiation. The polypeptide is Zinc transporter ZIP13 (Bos taurus (Bovine)).